A 55-amino-acid chain; its full sequence is Large ribosomal subunit protein bL33 (55 aa).

It belongs to the bacterial ribosomal protein bL33 family.

This Buchnera aphidicola subsp. Schizaphis graminum (strain Sg) protein is Large ribosomal subunit protein bL33.